The following is a 432-amino-acid chain: FLYWCH-type zinc finger-containing protein peb-1 (432 aa).

The segment at 1–33 (MLGLEKPLSSDISSSSTDTSAISPISVSSMPLS) is disordered. The span at 9-26 (SSDISSSSTDTSAISPIS) shows a compositional bias: low complexity. A DNA-binding region (required for DNA-binding) is located at residues 30–188 (MPLSPDKEKK…RNKEGKPRKP (159 aa)). The segment at 53–120 (IVTSFKGYQK…NACTKNTHNH (68 aa)) adopts an FLYWCH-type zinc-finger fold. The tract at residues 174 to 195 (SLVSARNKEGKPRKPKSKTSTN) is disordered.

It is found in the nucleus. Functionally, putative transcription factor. Binds to specific sequence motif 5'-[TC][AGT]TGCC[GA][AT]-3' in regulatory elements of target genes such as myosin myo-2. May modulate gene expression, perhaps acting in opposition to transcription factor pha-4. Involved in morphogenesis, perhaps especially in formation of the pharynx. Plays roles in molting, feeding and morphology. The polypeptide is FLYWCH-type zinc finger-containing protein peb-1 (Caenorhabditis briggsae).